A 188-amino-acid polypeptide reads, in one-letter code: Nicotinamide/nicotinic acid mononucleotide adenylyltransferase (188 aa).

It belongs to the archaeal NMN adenylyltransferase family.

It catalyses the reaction beta-nicotinamide D-ribonucleotide + ATP + H(+) = diphosphate + NAD(+). It carries out the reaction nicotinate beta-D-ribonucleotide + ATP + H(+) = deamido-NAD(+) + diphosphate. It functions in the pathway cofactor biosynthesis; NAD(+) biosynthesis; NAD(+) from nicotinamide D-ribonucleotide: step 1/1. The protein operates within cofactor biosynthesis; NAD(+) biosynthesis; deamido-NAD(+) from nicotinate D-ribonucleotide: step 1/1. Its function is as follows. Dual substrate specificity enzyme that catalyzes the formation of NAD(+) from nicotinamide mononucleotide (NMN) and the formation of deamido-NAD(+) (NaAD) from nicotinate mononucleotide (NaMN). Shows nearly identical catalytic efficiency for both physiological substrates. Plays an essential role in all three routes of NAD biogenesis, de novo synthesis as well as the deamidating and nondeamidating salvage pathways. In Acinetobacter baylyi (strain ATCC 33305 / BD413 / ADP1), this protein is Nicotinamide/nicotinic acid mononucleotide adenylyltransferase.